A 1530-amino-acid chain; its full sequence is DNA-directed RNA polymerase III subunit RPC1 (1530 aa).

C74, C77, C84, H87, C114, C117, and C161 together coordinate Zn(2+). Residues D503, D505, and D507 each coordinate Mg(2+). The bridging helix stretch occupies residues 846 to 858 (PTEFFFHTMAGRE). The segment covering 992 to 1001 (EEQESREDAL) has biased composition (basic and acidic residues). Disordered regions lie at residues 992–1016 (EEQESREDALHNSNGKTNDRESRPR) and 1057–1099 (NLLN…SKEG).

This sequence belongs to the RNA polymerase beta' chain family. In terms of assembly, component of the RNA polymerase III (Pol III) complex consisting of 17 subunits.

The protein localises to the nucleus. It catalyses the reaction RNA(n) + a ribonucleoside 5'-triphosphate = RNA(n+1) + diphosphate. Its function is as follows. DNA-dependent RNA polymerase catalyzes the transcription of DNA into RNA using the four ribonucleoside triphosphates as substrates. Largest and catalytic core component of RNA polymerase III which synthesizes small RNAs, such as 5S rRNA and tRNAs. Forms the polymerase active center together with the second largest subunit. A single-stranded DNA template strand of the promoter is positioned within the central active site cleft of Pol III. A bridging helix emanates from RPC1 and crosses the cleft near the catalytic site and is thought to promote translocation of Pol III by acting as a ratchet that moves the RNA-DNA hybrid through the active site by switching from straight to bent conformations at each step of nucleotide addition. The polypeptide is DNA-directed RNA polymerase III subunit RPC1 (Trypanosoma brucei brucei).